A 26-amino-acid chain; its full sequence is Delta-conotoxin Am2766 (26 aa).

Cystine bridges form between C1/C16, C8/C20, and C15/C24. Residue E26 is modified to Glutamic acid 1-amide.

Expressed by the venom duct.

It is found in the secreted. Its function is as follows. Delta-conotoxins bind to site 6 of voltage-gated sodium channels (Nav) and inhibit the inactivation process. In Conus amadis (Amadis cone), this protein is Delta-conotoxin Am2766.